A 181-amino-acid polypeptide reads, in one-letter code: Mating-type M-specific polypeptide Mc (181 aa).

Residues 103–171 constitute a DNA-binding region (HMG box); the sequence is TPRPPNAFIL…QHQKMYPGYK (69 aa).

The protein resides in the nucleus. Its function is as follows. Mating type proteins are sequence specific DNA-binding proteins that act as master switches in yeast differentiation by controlling gene expression in a cell type-specific fashion. Positive regulator of MFM genes. The HMG box recognizes the DNA sequence 5'-AACAAAG-3'. Required for conjugation and efficient meiosis. The sequence is that of Mating-type M-specific polypeptide Mc (matMc) from Schizosaccharomyces kambucha (Fission yeast).